Here is a 412-residue protein sequence, read N- to C-terminus: Protein arginine N-methyltransferase 2 (412 aa).

Positions 190–412 (TAADPDTYLN…YYYHPKISFA (223 aa)) constitute an RMT2 domain. Residues Tyr197, Met227, 250-255 (FGMGII), 271-273 (EAH), 298-299 (WQ), and Asp319 each bind S-adenosyl-L-methionine.

Belongs to the class I-like SAM-binding methyltransferase superfamily. RMT2 methyltransferase family. In terms of assembly, monomer.

Its subcellular location is the cytoplasm. The protein localises to the nucleus. S-adenosyl-L-methionine-dependent protein-arginine N-methyltransferase that methylates the delta-nitrogen atom of arginine residues to form N5-methylarginine (type IV) in target proteins. Monomethylates ribosomal protein L12. In Candida glabrata (strain ATCC 2001 / BCRC 20586 / JCM 3761 / NBRC 0622 / NRRL Y-65 / CBS 138) (Yeast), this protein is Protein arginine N-methyltransferase 2.